Here is a 271-residue protein sequence, read N- to C-terminus: GPN-loop GTPase 3 (271 aa).

Gly-13–Thr-18 lines the GTP pocket. Residues Gly-70–Asn-72 carry the Gly-Pro-Asn (GPN)-loop; involved in dimer interface motif. Ser-173–Asp-176 contributes to the GTP binding site.

This sequence belongs to the GPN-loop GTPase family. In terms of assembly, heterodimers with GPN1 or GPN2. Binds to RNA polymerase II (RNAPII).

In terms of biological role, small GTPase required for proper nuclear import of RNA polymerase II and III (RNAPII and RNAPIII). May act at an RNAP assembly step prior to nuclear import. This Kluyveromyces lactis (strain ATCC 8585 / CBS 2359 / DSM 70799 / NBRC 1267 / NRRL Y-1140 / WM37) (Yeast) protein is GPN-loop GTPase 3.